The sequence spans 231 residues: Octanoyl-[acyl-carrier-protein]:protein N-octanoyltransferase LIPT2, mitochondrial (231 aa).

The region spanning 41–224 is the BPL/LPL catalytic domain; the sequence is GTKAGVLLVC…AFKETFKCTL (184 aa). Lys43 carries the N6-succinyllysine modification. Residues 85–92, 154–156, and 167–169 contribute to the substrate site; these read RGGLATFH, AIG, and GLA. Cys185 serves as the catalytic Acyl-thioester intermediate.

This sequence belongs to the LipB family.

Its subcellular location is the mitochondrion. It carries out the reaction octanoyl-[ACP] + L-lysyl-[protein] = N(6)-octanoyl-L-lysyl-[protein] + holo-[ACP] + H(+). It functions in the pathway protein modification; protein lipoylation via endogenous pathway; protein N(6)-(lipoyl)lysine from octanoyl-[acyl-carrier-protein]: step 1/2. Its function is as follows. Catalyzes the transfer of endogenously produced octanoic acid from octanoyl-acyl-carrier-protein onto the lipoyl domains of lipoate-dependent enzymes such as the protein H of the glycine cleavage system (GCSH). Lipoyl-ACP can also act as a substrate although octanoyl-ACP is likely to be the physiological substrate. This Mus musculus (Mouse) protein is Octanoyl-[acyl-carrier-protein]:protein N-octanoyltransferase LIPT2, mitochondrial.